The following is a 475-amino-acid chain: ATP synthase subunit beta (475 aa).

ATP is bound at residue 153–160; the sequence is GGAGVGKT.

This sequence belongs to the ATPase alpha/beta chains family. As to quaternary structure, F-type ATPases have 2 components, CF(1) - the catalytic core - and CF(0) - the membrane proton channel. CF(1) has five subunits: alpha(3), beta(3), gamma(1), delta(1), epsilon(1). CF(0) has three main subunits: a(1), b(2) and c(9-12). The alpha and beta chains form an alternating ring which encloses part of the gamma chain. CF(1) is attached to CF(0) by a central stalk formed by the gamma and epsilon chains, while a peripheral stalk is formed by the delta and b chains.

The protein localises to the cell membrane. The catalysed reaction is ATP + H2O + 4 H(+)(in) = ADP + phosphate + 5 H(+)(out). Produces ATP from ADP in the presence of a proton gradient across the membrane. The catalytic sites are hosted primarily by the beta subunits. In Limosilactobacillus reuteri (strain DSM 20016) (Lactobacillus reuteri), this protein is ATP synthase subunit beta.